Reading from the N-terminus, the 72-residue chain is Translation initiation factor IF-1 (72 aa).

The S1-like domain maps to 1 to 72; the sequence is MPKEEVLEFP…TKGRITYRFK (72 aa).

This sequence belongs to the IF-1 family. In terms of assembly, component of the 30S ribosomal translation pre-initiation complex which assembles on the 30S ribosome in the order IF-2 and IF-3, IF-1 and N-formylmethionyl-tRNA(fMet); mRNA recruitment can occur at any time during PIC assembly.

The protein resides in the cytoplasm. Its function is as follows. One of the essential components for the initiation of protein synthesis. Stabilizes the binding of IF-2 and IF-3 on the 30S subunit to which N-formylmethionyl-tRNA(fMet) subsequently binds. Helps modulate mRNA selection, yielding the 30S pre-initiation complex (PIC). Upon addition of the 50S ribosomal subunit IF-1, IF-2 and IF-3 are released leaving the mature 70S translation initiation complex. The chain is Translation initiation factor IF-1 from Rhizobium etli (strain ATCC 51251 / DSM 11541 / JCM 21823 / NBRC 15573 / CFN 42).